A 196-amino-acid polypeptide reads, in one-letter code: Holliday junction branch migration complex subunit RuvA (196 aa).

The interval 1–63 (MLDFIKGEIV…EETHQLFGFI (63 aa)) is domain I. The tract at residues 64 to 142 (DKKERQLFTH…PDNIPSSDTI (79 aa)) is domain II. The segment at 143–146 (ITNI) is flexible linker. Residues 146 to 196 (ISSNITKEAITALITLGFSQSASQKVVNKIVSNNSSSTTIEQIIKKALKLL) form a domain III region.

This sequence belongs to the RuvA family. As to quaternary structure, homotetramer. Forms an RuvA(8)-RuvB(12)-Holliday junction (HJ) complex. HJ DNA is sandwiched between 2 RuvA tetramers; dsDNA enters through RuvA and exits via RuvB. An RuvB hexamer assembles on each DNA strand where it exits the tetramer. Each RuvB hexamer is contacted by two RuvA subunits (via domain III) on 2 adjacent RuvB subunits; this complex drives branch migration. In the full resolvosome a probable DNA-RuvA(4)-RuvB(12)-RuvC(2) complex forms which resolves the HJ.

It localises to the cytoplasm. In terms of biological role, the RuvA-RuvB-RuvC complex processes Holliday junction (HJ) DNA during genetic recombination and DNA repair, while the RuvA-RuvB complex plays an important role in the rescue of blocked DNA replication forks via replication fork reversal (RFR). RuvA specifically binds to HJ cruciform DNA, conferring on it an open structure. The RuvB hexamer acts as an ATP-dependent pump, pulling dsDNA into and through the RuvAB complex. HJ branch migration allows RuvC to scan DNA until it finds its consensus sequence, where it cleaves and resolves the cruciform DNA. This is Holliday junction branch migration complex subunit RuvA from Azobacteroides pseudotrichonymphae genomovar. CFP2.